The primary structure comprises 179 residues: Large ribosomal subunit protein uL6 (179 aa).

This sequence belongs to the universal ribosomal protein uL6 family. Part of the 50S ribosomal subunit.

This protein binds to the 23S rRNA, and is important in its secondary structure. It is located near the subunit interface in the base of the L7/L12 stalk, and near the tRNA binding site of the peptidyltransferase center. In Mycobacterium tuberculosis (strain ATCC 25618 / H37Rv), this protein is Large ribosomal subunit protein uL6.